The following is a 560-amino-acid chain: MPDAAVKYRAYPQVNIPDRTWPTKTITKAPVWCSVDLRDGNQALVDPMGHDRKARMFHLLIEMGFKEIEIGFPSASQTDFDFARWCVEEGNVPDDVSLQVLVQCRPELITRTFEALEGANRPIVHFYNSTSELQRRVVFAKDVQGIKQIAVDAAKMITDMATKAGGGYRFEYSPESFTGTELDVALEICNAVIEVVKPTPDNKLIINLPSTVEMATPNVYADQIEWMCRNLDNRENLIVSLHPHNDRGTGIAAAELALLAGADRVEGTLFGNGERTGNVDMVTMALNMFTQGVDPEIDCSNIERIKEVFEYSNQMAIGERHPYVGELVYTAFSGSHQDAINKGMKAAQVANHPVWEVPYLPIDPRDVGRSYEAIIRINSQSGKGGIAYILQQDYGLNLPRNLQVEFREDIQRITDVEGKELPSRRIYDRFIERYVTQPEGRLRFVDHHTYPDTEHKGQRIVAAEITDNGEIKRIEGRGNGPIDGFINALSHYLGIEMSVEDYSEHSLQHGSNAAAISYVETSYPGGKLFGAGINTNIVAASLEAIVSAANRVLDVKAGKA.

A Pyruvate carboxyltransferase domain is found at 30 to 303; the sequence is PVWCSVDLRD…DPEIDCSNIE (274 aa). 4 residues coordinate Mg(2+): Asp39, His242, His244, and Asn278. The segment at 437-560 is regulatory domain; the sequence is QPEGRLRFVD…RVLDVKAGKA (124 aa).

It belongs to the alpha-IPM synthase/homocitrate synthase family. LeuA type 2 subfamily. As to quaternary structure, homodimer. It depends on Mg(2+) as a cofactor.

Its subcellular location is the cytoplasm. The catalysed reaction is 3-methyl-2-oxobutanoate + acetyl-CoA + H2O = (2S)-2-isopropylmalate + CoA + H(+). The protein operates within amino-acid biosynthesis; L-leucine biosynthesis; L-leucine from 3-methyl-2-oxobutanoate: step 1/4. Its function is as follows. Catalyzes the condensation of the acetyl group of acetyl-CoA with 3-methyl-2-oxobutanoate (2-ketoisovalerate) to form 3-carboxy-3-hydroxy-4-methylpentanoate (2-isopropylmalate). This Rhizobium johnstonii (strain DSM 114642 / LMG 32736 / 3841) (Rhizobium leguminosarum bv. viciae) protein is 2-isopropylmalate synthase.